Here is a 700-residue protein sequence, read N- to C-terminus: mRNA cap guanine-N(7) methyltransferase (700 aa).

2 stretches are compositionally biased toward basic and acidic residues: residues 1–10 (MVYDPIRDCD) and 52–67 (EPPR…ESHR). 2 disordered regions span residues 1-263 (MVYD…SVLR) and 277-392 (AHAN…ERNK). Positions 113–128 (RSPSMSLSPRSQNQSL) are enriched in polar residues. Low complexity-rich tracts occupy residues 129–144 (PYPS…SAHP) and 220–241 (PQPT…TPHH). Residues 429-700 (SPIIGLKKFN…LYMGFAFEKM (272 aa)) form the mRNA cap 0 methyltransferase domain. Residue 438–439 (NN) coordinates mRNA. Residues Lys-442, Gly-461, Asp-483, Asp-512, Gln-538, and Tyr-543 each contribute to the S-adenosyl-L-methionine site.

Belongs to the class I-like SAM-binding methyltransferase superfamily. mRNA cap 0 methyltransferase family.

The protein localises to the nucleus. It carries out the reaction a 5'-end (5'-triphosphoguanosine)-ribonucleoside in mRNA + S-adenosyl-L-methionine = a 5'-end (N(7)-methyl 5'-triphosphoguanosine)-ribonucleoside in mRNA + S-adenosyl-L-homocysteine. Responsible for methylating the 5'-cap structure of mRNAs. This Cryptococcus neoformans var. neoformans serotype D (strain B-3501A) (Filobasidiella neoformans) protein is mRNA cap guanine-N(7) methyltransferase (ABD1).